The chain runs to 373 residues: Flagellar P-ring protein 1 (373 aa).

The first 25 residues, 1-25 (MKPINTFFSSFLLALTLGLPATSQA), serve as a signal peptide directing secretion.

It belongs to the FlgI family. In terms of assembly, the basal body constitutes a major portion of the flagellar organelle and consists of four rings (L,P,S, and M) mounted on a central rod.

The protein localises to the periplasm. The protein resides in the bacterial flagellum basal body. In terms of biological role, assembles around the rod to form the L-ring and probably protects the motor/basal body from shearing forces during rotation. The protein is Flagellar P-ring protein 1 of Vibrio parahaemolyticus serotype O3:K6 (strain RIMD 2210633).